Reading from the N-terminus, the 185-residue chain is Ribosome-recycling factor (185 aa).

Belongs to the RRF family.

It is found in the cytoplasm. Its function is as follows. Responsible for the release of ribosomes from messenger RNA at the termination of protein biosynthesis. May increase the efficiency of translation by recycling ribosomes from one round of translation to another. In Enterobacter sp. (strain 638), this protein is Ribosome-recycling factor.